We begin with the raw amino-acid sequence, 294 residues long: Cell division protein FtsQ (294 aa).

Residues 1-26 (MARGPNRRRVDRVPGERRRRLARAMA) lie on the Cytoplasmic side of the membrane. A helical membrane pass occupies residues 27–49 (LALPSILALAALGGAATLGWRVG). Over 50 to 294 (WKSDLLRVRE…GPQGRSSSLR (245 aa)) the chain is Periplasmic. The 69-residue stretch at 55 to 123 (LRVREIRFEG…PALEVQLAER (69 aa)) folds into the POTRA domain. Residues 266–294 (AGRRGEPDGRSSYAAGGGGGPQGRSSSLR) are disordered.

It belongs to the FtsQ/DivIB family. FtsQ subfamily.

Its subcellular location is the cell inner membrane. In terms of biological role, essential cell division protein. In Anaeromyxobacter sp. (strain K), this protein is Cell division protein FtsQ.